The chain runs to 206 residues: Large ribosomal subunit protein uL4 (206 aa).

Residues 48–78 (THSVKTRGHVSGGGAKPWRQKGTGRARAGSN) are disordered.

The protein belongs to the universal ribosomal protein uL4 family. Part of the 50S ribosomal subunit.

One of the primary rRNA binding proteins, this protein initially binds near the 5'-end of the 23S rRNA. It is important during the early stages of 50S assembly. It makes multiple contacts with different domains of the 23S rRNA in the assembled 50S subunit and ribosome. In terms of biological role, forms part of the polypeptide exit tunnel. The polypeptide is Large ribosomal subunit protein uL4 (Lawsonia intracellularis (strain PHE/MN1-00)).